Here is a 365-residue protein sequence, read N- to C-terminus: Serine/threonine-protein kinase SAPK6 (365 aa).

The Protein kinase domain occupies 4–260 (YELLKDIGSG…IREIRNHPWF (257 aa)). ATP is bound by residues 10-18 (IGSGNFGVA) and Lys33. Asp123 (proton acceptor) is an active-site residue. The segment at 298 to 365 (VQEAKTPPPS…AHASCDLQKS (68 aa)) is disordered. Positions 317-347 (TEEEEQEDGKNPDDDEGDRDEEEGEEGDSED) are enriched in acidic residues.

This sequence belongs to the protein kinase superfamily. Ser/Thr protein kinase family. Interacts with BZIP46. In terms of processing, may be phosphorylated. In terms of tissue distribution, expressed in leaf blades and leaf sheaths. Expressed in shoots and roots of young seedlings.

It carries out the reaction L-seryl-[protein] + ATP = O-phospho-L-seryl-[protein] + ADP + H(+). It catalyses the reaction L-threonyl-[protein] + ATP = O-phospho-L-threonyl-[protein] + ADP + H(+). With respect to regulation, activated by hyperosmotic stress. May play a role in signal transduction of hyperosmotic response. Can phosphorylate ABI5 in vitro. Can phosphorylate BZIP46 in vitro. This is Serine/threonine-protein kinase SAPK6 from Oryza sativa subsp. japonica (Rice).